Reading from the N-terminus, the 189-residue chain is MRWNTFWGILCLSLLAVGTCQDDAENIEYKVSISGTSVELTCPLDSDENLKWEKNGQELPQKHDKHLVLQDFSEVEDSGYYVCYTPASNKNTYLYLKARVCEYCVEVDLTAVAIIIIVDICITLGLLMVIYYWSKNRKAKAKPVTRGTGAGSRPRGQNKERPPPVPNPDYEPIRKGQRDLYSGLNQRAV.

The first 21 residues, 1–21 (MRWNTFWGILCLSLLAVGTCQ), serve as a signal peptide directing secretion. An Ig-like domain is found at 23–99 (DAENIEYKVS…KNTYLYLKAR (77 aa)). Residues 23–108 (DAENIEYKVS…RVCEYCVEVD (86 aa)) lie on the Extracellular side of the membrane. Cys42 and Cys83 form a disulfide bridge. Residues 109–134 (LTAVAIIIIVDICITLGLLMVIYYWS) form a helical membrane-spanning segment. Residues 135–189 (KNRKAKAKPVTRGTGAGSRPRGQNKERPPPVPNPDYEPIRKGQRDLYSGLNQRAV) lie on the Cytoplasmic side of the membrane. Residues 143–189 (PVTRGTGAGSRPRGQNKERPPPVPNPDYEPIRKGQRDLYSGLNQRAV) form a disordered region. The interval 157–174 (QNKERPPPVPNPDYEPIR) is NUMB-binding region. Residues 160 to 187 (ERPPPVPNPDYEPIRKGQRDLYSGLNQR) form the ITAM domain. The proline-rich sequence stretch occupies residues 161 to 168 (RPPPVPNP). Tyr170 and Tyr181 each carry phosphotyrosine.

As to quaternary structure, the TCR-CD3 complex is composed of a CD3D/CD3E and a CD3G/CD3E heterodimers that preferentially associate with TCRalpha and TCRbeta, respectively, to form TCRalpha/CD3E/CD3G and TCRbeta/CD3G/CD3E trimers. In turn, the hexamer interacts with CD3Z homodimer to form the TCR-CD3 complex. Alternatively, TCRalpha and TCRbeta can be replaced by TCRgamma and TCRdelta. Interacts with CD6. Interacts (via Proline-rich sequence) with NCK1; the interaction is ligand dependent but independent of tyrosine kinase activation. Phosphorylated on Tyr residues after T-cell receptor triggering by LCK in association with CD4/CD8.

The protein resides in the cell membrane. In terms of biological role, part of the TCR-CD3 complex present on T-lymphocyte cell surface that plays an essential role in adaptive immune response. When antigen presenting cells (APCs) activate T-cell receptor (TCR), TCR-mediated signals are transmitted across the cell membrane by the CD3 chains CD3D, CD3E, CD3G and CD3Z. All CD3 chains contain immunoreceptor tyrosine-based activation motifs (ITAMs) in their cytoplasmic domain. Upon TCR engagement, these motifs become phosphorylated by Src family protein tyrosine kinases LCK and FYN, resulting in the activation of downstream signaling pathways. In addition of this role of signal transduction in T-cell activation, CD3E plays an essential role in correct T-cell development. Also participates in internalization and cell surface down-regulation of TCR-CD3 complexes via endocytosis sequences present in CD3E cytosolic region. In addition to its role as a TCR coreceptor, it serves as a receptor for ITPRIPL1. Ligand recognition inhibits T-cell activation by promoting interaction with NCK1, which prevents CD3E-ZAP70 interaction and blocks the ERK-NFkB signaling cascade and calcium influx. In Mus musculus (Mouse), this protein is T-cell surface glycoprotein CD3 epsilon chain (Cd3e).